Consider the following 206-residue polypeptide: Large ribosomal subunit protein uL4 (206 aa).

This sequence belongs to the universal ribosomal protein uL4 family. In terms of assembly, part of the 50S ribosomal subunit.

In terms of biological role, one of the primary rRNA binding proteins, this protein initially binds near the 5'-end of the 23S rRNA. It is important during the early stages of 50S assembly. It makes multiple contacts with different domains of the 23S rRNA in the assembled 50S subunit and ribosome. Functionally, forms part of the polypeptide exit tunnel. The chain is Large ribosomal subunit protein uL4 from Bradyrhizobium diazoefficiens (strain JCM 10833 / BCRC 13528 / IAM 13628 / NBRC 14792 / USDA 110).